The chain runs to 284 residues: Diaminopimelate epimerase (284 aa).

2 residues coordinate substrate: asparagine 13 and asparagine 70. The active-site Proton donor is cysteine 79. Substrate is bound by residues glycine 80–asparagine 81, asparagine 167, asparagine 200, and glutamate 218–arginine 219. Catalysis depends on cysteine 227, which acts as the Proton acceptor. Glycine 228 to threonine 229 is a substrate binding site.

Belongs to the diaminopimelate epimerase family. In terms of assembly, homodimer.

Its subcellular location is the cytoplasm. The catalysed reaction is (2S,6S)-2,6-diaminopimelate = meso-2,6-diaminopimelate. The protein operates within amino-acid biosynthesis; L-lysine biosynthesis via DAP pathway; DL-2,6-diaminopimelate from LL-2,6-diaminopimelate: step 1/1. In terms of biological role, catalyzes the stereoinversion of LL-2,6-diaminopimelate (L,L-DAP) to meso-diaminopimelate (meso-DAP), a precursor of L-lysine and an essential component of the bacterial peptidoglycan. The polypeptide is Diaminopimelate epimerase (Prochlorococcus marinus (strain NATL2A)).